A 453-amino-acid polypeptide reads, in one-letter code: Aldehyde dehydrogenase, dimeric NADP-preferring (453 aa).

Position 2 is an N-acetylserine (Ser-2). The residue at position 178 (Lys-178) is an N6-acetyllysine. Residue 188 to 193 (GNTAVG) participates in NAD(+) binding. Position 194 is an N6-acetyllysine (Lys-194). Residues Glu-210 and Cys-244 contribute to the active site.

Belongs to the aldehyde dehydrogenase family. Homodimer.

It localises to the cytoplasm. The catalysed reaction is an aldehyde + NAD(+) + H2O = a carboxylate + NADH + 2 H(+). The enzyme catalyses octanal + NAD(+) + H2O = octanoate + NADH + 2 H(+). Its function is as follows. ALDHs play a major role in the detoxification of alcohol-derived acetaldehyde. They are involved in the metabolism of corticosteroids, biogenic amines, neurotransmitters, and lipid peroxidation. Oxidizes medium and long chain aldehydes into non-toxic fatty acids. Preferentially oxidizes aromatic aldehyde substrates. Comprises about 50 percent of corneal epithelial soluble proteins. May play a role in preventing corneal damage caused by ultraviolet light. This Canis lupus familiaris (Dog) protein is Aldehyde dehydrogenase, dimeric NADP-preferring (ALDH3A1).